The chain runs to 818 residues: Protein TOC75-3, chloroplastic (818 aa).

A chloroplast-targeting transit peptide spans 1 to 79 (MAAFSVNGQL…LKNLAKPLAV (79 aa)). Positions 15–41 (TSSTASTSLSSRRKFLSPSSSRLPRIS) are enriched in low complexity. The segment at 15-67 (TSSTASTSLSSRRKFLSPSSSRLPRISTQSPRVPSIKCSKSLPNRDTETSSKD) is disordered. Residues 57 to 67 (PNRDTETSSKD) are compositionally biased toward basic and acidic residues. A chloroplast; outer membrane-targeting transit peptide spans 80–140 (ASVSSAASFF…KLFSPSPAVA (61 aa)). 3 consecutive POTRA domains span residues 141–246 (DEEQ…FAES), 247–364 (TWQS…VVEG), and 365–448 (DITQ…LKEL). At 141–473 (DEEQSPDWDS…GRGGAPTLAS (333 aa)) the chain is on the chloroplast intermembrane side. A beta stranded transmembrane segment spans residues 474–482 (FQPGGSVTF). Over 483-509 (EHRNLQGLNRSLMGSVTTSNFLNPQDD) the chain is Cytoplasmic. A beta stranded transmembrane segment spans residues 510-518 (LSFKLEYVH). Over 519–562 (PYLDGVYNPRNRTFKTSCFNSRKLSPVFTGGPGVEEVPPIWVDR) the chain is Chloroplast intermembrane. The beta stranded transmembrane segment at 563–570 (AGVKANIT) threads the bilayer. The Cytoplasmic segment spans residues 571–578 (ENFTRQSK). A beta stranded membrane pass occupies residues 579–586 (FTYGLVME). At 587-693 (EITTRDESSH…VEQGAGKSPP (107 aa)) the chain is on the chloroplast intermembrane side. The beta stranded transmembrane segment at 694–702 (PVLVLHGHY) threads the bilayer. Residues 703 to 714 (GGCVGDLPSYDA) are Cytoplasmic-facing. The beta stranded transmembrane segment at 715–723 (FVLGGPYSV) threads the bilayer. Topologically, residues 724 to 785 (RGYNMGELGA…VYRRTGQGSS (62 aa)) are chloroplast intermembrane. A beta stranded membrane pass occupies residues 786–792 (YGAGVKL). Topologically, residues 793 to 806 (GLVRAEYAVDHNNG) are cytoplasmic. A beta stranded transmembrane segment spans residues 807–814 (TGALFFRF). Over 815-818 (GERY) the chain is Chloroplast intermembrane.

The protein belongs to the TOC75 family. As to quaternary structure, part of the TOC core complex that includes a protein for the specific recognition of transit peptides surrounded by a ring composed of four proteins forming translocation channels, and four to five GTP-binding proteins providing energy. This core complex can interact with components of the TIC complex to form a larger import complex. Chloroplastic protein precursors such as prSS (precursor of the RuBisCO small subunit) also interact with these complexes. The TOC complex contains a specific subset of polar lipids such as digalactosyldiacylglyceride (DGDG), phosphatidylcholine (PC) and phosphatidylglycerol (PG). TOC75-3 interacts with TOC34/OEP34, TOC159/TOC86, TOC132 and TOC120. Interacts with SP1. Interacts with TIC236. Mostly expressed in young and actively dividing photosynthetic tissues and, to a lower extent, in old leaves and roots. Particularly low levels in leaves after etiolation.

The protein localises to the plastid. It is found in the chloroplast outer membrane. Its function is as follows. Essential protein. Mediates the insertion of proteins targeted to the outer membrane of chloroplasts. Required for the import of protein precursors into chloroplasts. Forms the voltage-dependent preprotein translocation channels (hydrophilic beta barrel) of the TOC complex in the chloroplastic outer membrane. The protein is Protein TOC75-3, chloroplastic of Arabidopsis thaliana (Mouse-ear cress).